The sequence spans 557 residues: Urocanate hydratase (557 aa).

The disordered stretch occupies residues 1–20 (MSNPRHNEREVRSPRGDELN). Residues 52 to 53 (GG), glutamine 130, 176 to 178 (GMG), glutamate 196, arginine 201, 242 to 243 (NA), 263 to 267 (QTSAH), 273 to 274 (YL), and tyrosine 322 contribute to the NAD(+) site. Cysteine 410 is an active-site residue. Glycine 492 serves as a coordination point for NAD(+).

The protein belongs to the urocanase family. NAD(+) is required as a cofactor.

It is found in the cytoplasm. The enzyme catalyses 4-imidazolone-5-propanoate = trans-urocanate + H2O. The protein operates within amino-acid degradation; L-histidine degradation into L-glutamate; N-formimidoyl-L-glutamate from L-histidine: step 2/3. In terms of biological role, catalyzes the conversion of urocanate to 4-imidazolone-5-propionate. This chain is Urocanate hydratase, found in Brucella anthropi (strain ATCC 49188 / DSM 6882 / CCUG 24695 / JCM 21032 / LMG 3331 / NBRC 15819 / NCTC 12168 / Alc 37) (Ochrobactrum anthropi).